We begin with the raw amino-acid sequence, 105 residues long: UPF0251 protein AF_0666 (105 aa).

It belongs to the UPF0251 family.

This is UPF0251 protein AF_0666 from Archaeoglobus fulgidus (strain ATCC 49558 / DSM 4304 / JCM 9628 / NBRC 100126 / VC-16).